Consider the following 290-residue polypeptide: Membrane-spanning 4-domains subfamily A member 8 (290 aa).

The span at 1–21 (MNRPTAQGAVNLSGSKFSTAK) shows a compositional bias: polar residues. The segment at 1–25 (MNRPTAQGAVNLSGSKFSTAKSWEP) is disordered. Topologically, residues 1 to 108 (MNRPTAQGAV…PAQRVLKKGQ (108 aa)) are cytoplasmic. The helical transmembrane segment at 109–129 (VLGAIQILIGLVHIGLGSIMI) threads the bilayer. Residues 130 to 138 (TNLFSHYTP) are Extracellular-facing. The chain crosses the membrane as a helical span at residues 139 to 159 (VSLYGGFPFWGGIWFIISGSL). The Cytoplasmic portion of the chain corresponds to 160 to 174 (SVAAETQPNSPCLLN). Residues 175–195 (GSVGLNIFSAICSAVGIMLFI) traverse the membrane as a helical segment. Over 196 to 220 (TDISISSGYIYPSYYPYQENLGVRT) the chain is Extracellular. A helical membrane pass occupies residues 221–241 (GVAISSVLLIFCLLELSIASV). The Cytoplasmic portion of the chain corresponds to 242-290 (SSHFGCQVACCHYNNPGVVIPNVYAANPVVIPEPPNPIPSYSEVVQDSR).

It belongs to the MS4A family. Expressed strongly in intestine and colon and minimally in lung and ovary.

It is found in the membrane. Functionally, may be involved in signal transduction as a component of a multimeric receptor complex. The polypeptide is Membrane-spanning 4-domains subfamily A member 8 (Ms4a8) (Mus musculus (Mouse)).